The sequence spans 201 residues: Pyrrolidone-carboxylate peptidase (201 aa).

Active-site residues include Glu81, Cys143, and His168.

It belongs to the peptidase C15 family. As to quaternary structure, homotetramer.

It is found in the cytoplasm. It catalyses the reaction Release of an N-terminal pyroglutamyl group from a polypeptide, the second amino acid generally not being Pro.. In terms of biological role, removes 5-oxoproline from various penultimate amino acid residues except L-proline. In Halalkalibacterium halodurans (strain ATCC BAA-125 / DSM 18197 / FERM 7344 / JCM 9153 / C-125) (Bacillus halodurans), this protein is Pyrrolidone-carboxylate peptidase (pcp).